The following is a 400-amino-acid chain: Axin-like protein 1 (400 aa).

Residues 4–132 form the RGS domain; sequence RSKFSIDRVL…TTTADVNTTW (129 aa). 2 disordered regions span residues 190–233 and 278–306; these read QETK…TLKV and GTLE…GSEA. The span at 194 to 210 shows a compositional bias: basic and acidic residues; it reads NSSETEEHAESPRKEKS. Residues 287–298 show a composition bias toward polar residues; sequence FTGTNNGFSTLQ. The DIX domain occupies 305–392; the sequence is EAPKMTVELR…RITAICRMCP (88 aa).

As to quaternary structure, interacts with bar-1, dsh-2, gsk-3, and mig-5.

Its function is as follows. Works in parallel with pry-1 in negatively regulating bar-1 signaling in vulval precursor cells and Q neuroblasts. Shown to have a role in excretory cell development. This Caenorhabditis elegans protein is Axin-like protein 1.